Here is a 364-residue protein sequence, read N- to C-terminus: Geissoschizine synthase (364 aa).

Cysteine 51 provides a ligand contact to Zn(2+). Asparagine 52 is a binding site for NADP(+). 7 residues coordinate Zn(2+): histidine 73, glutamate 74, cysteine 104, cysteine 107, cysteine 110, cysteine 118, and cysteine 168. NADP(+)-binding residues include leucine 194, glycine 196, leucine 197, serine 216, threonine 217, serine 218, lysine 221, arginine 261, valine 280, alanine 282, serine 304, threonine 306, and arginine 351.

This sequence belongs to the zinc-containing alcohol dehydrogenase family. Class-III subfamily. As to quaternary structure, homodimer. Zn(2+) serves as cofactor. Expressed in leaf epidermis.

It catalyses the reaction (19E)-geissoschizine + NADP(+) = 4,21-dehydrogeissoschizine + NADPH. It functions in the pathway alkaloid biosynthesis. Its function is as follows. Component of the seco-iridoid and derivatives monoterpenoid indole alkaloids (MIAs, e.g. catharanthine, tabersonine, vincadifformine, vindoline, vincristine, quinine and strychnine) biosynthesis pathway. During the conversion of strictosidine aglycone to geissoschizine, catalyzes iminium reduction on 4,21-dehydrogeissoschizine to produce 19E-geissoschizine, precursor of catharanthine and tabersonine derivatives. May also trigger the production of reactive intermediate used by the HL1, HL2, HL3 and HL4 to form catharanthine, vincadifformine and tabersonine. This chain is Geissoschizine synthase, found in Catharanthus roseus (Madagascar periwinkle).